The sequence spans 307 residues: Mitochondrial brown fat uncoupling protein 1 (307 aa).

Topologically, residues 2-10 are mitochondrial intermembrane; it reads VNPTTSEVH. A helical membrane pass occupies residues 11-32; that stretch reads PTMGVKIFSAGVAACLADIITF. Solcar repeat units follow at residues 11 to 102, 111 to 201, and 210 to 295; these read PTMG…VQEY, PTLG…MKGA, and DDVP…LKKE. Topologically, residues 33 to 73 are mitochondrial matrix; the sequence is PLDTAKVRLQIQGEGQISSTIRYKGVLGTITTLAKTEGLPK. Residue K56 coordinates fatty acid 16:0. Residues 74–96 traverse the membrane as a helical segment; the sequence is LYSGLPAGIQRQISFASLRIGLY. The Mitochondrial intermembrane segment spans residues 97–116; the sequence is DTVQEYFSSGKETPPTLGNR. The chain crosses the membrane as a helical span at residues 117 to 133; it reads ISAGLMTGGVAVFIGQP. The Mitochondrial matrix segment spans residues 134 to 178; it reads TEVVKVRLQAQSHLHGIKPRYTGTYNAYRIIATTESFSTLWKGTT. Residues 179–195 traverse the membrane as a helical segment; the sequence is PNLLRNVIINCVELVTY. Topologically, residues 196-212 are mitochondrial intermembrane; that stretch reads DLMKGALVNNQILADDV. A helical membrane pass occupies residues 213 to 232; it reads PCHLLSAFVAGFCTTFLASP. Residues 233–266 lie on the Mitochondrial matrix side of the membrane; the sequence is ADVVKTRFINSLPGQYPSVPSCAMTMLTKEGPTA. A Cysteine sulfenic acid (-SOH) modification is found at C254. The helical transmembrane segment at 267 to 289 threads the bilayer; that stretch reads FFKGFVPSFLRLASWNVIMFVCF. K269 is a binding site for fatty acid 16:0. At 290 to 307 the chain is on the mitochondrial intermembrane side; the sequence is EQLKKELSKSRQTVDCTT.

This sequence belongs to the mitochondrial carrier (TC 2.A.29) family. Most probably functions as a monomer. Binds one purine nucleotide per monomer. However, has also been suggested to function as a homodimer or a homotetramer. Tightly associates with cardiolipin in the mitochondrion inner membrane; may stabilize and regulate its activity. In terms of processing, may undergo sulfenylation upon cold exposure. May increase the sensitivity of UCP1 thermogenic function to the activation by noradrenaline probably through structural effects. May undergo ubiquitin-mediated proteasomal degradation. Brown adipose tissue.

It is found in the mitochondrion inner membrane. The catalysed reaction is H(+)(in) = H(+)(out). Has no constitutive proton transporter activity and has to be activated by long-chain fatty acids/LCFAs. Inhibited by purine nucleotides. Both purine nucleotides and LCFAs bind the cytosolic side of the transporter and directly compete to activate or inhibit it. Activated by noradrenaline and reactive oxygen species. Despite lacking canonical translational encoding for selenocysteine, a small pool of the protein has been observed to selectively incorporate selenocysteine at 'Cys-254'. Selenocysteine-modified protein is highly sensitive to redox modification and may constitute a pool of protein highly sensitive to activation by elevated levels of reactive oxygen species (ROS). Its function is as follows. Mitochondrial protein responsible for thermogenic respiration, a specialized capacity of brown adipose tissue and beige fat that participates in non-shivering adaptive thermogenesis to temperature and diet variations and more generally to the regulation of energy balance. Functions as a long-chain fatty acid/LCFA and proton symporter, simultaneously transporting one LCFA and one proton through the inner mitochondrial membrane. However, LCFAs remaining associated with the transporter via their hydrophobic tails, it results in an apparent transport of protons activated by LCFAs. Thereby, dissipates the mitochondrial proton gradient and converts the energy of substrate oxydation into heat instead of ATP. Regulates the production of reactive oxygen species/ROS by mitochondria. The chain is Mitochondrial brown fat uncoupling protein 1 from Mesocricetus auratus (Golden hamster).